The chain runs to 615 residues: AP-1-like transcription factor yap1 (615 aa).

The span at 27–50 shows a compositional bias: polar residues; it reads SSNNPTQKQQTVTHNSEANQNLNH. 2 disordered regions span residues 27–84 and 99–180; these read SSNN…EDSP and NESL…RKEK. The Bipartite nuclear localization signal motif lies at 35–42; it reads QQTVTHNS. Over residues 52–67 the composition is skewed to low complexity; the sequence is PGHASSGSFSVSPPSG. The Bipartite nuclear localization signal motif lies at 68-75; sequence LDGSVNQS. Residues 118 to 147 show a composition bias toward basic and acidic residues; it reads PGDKRKDIDGQVNDKEDSGKKRRESDEKAA. One can recognise a bZIP domain in the interval 157–220; it reads SEPTSKRKAQ…ERLQLELKEY (64 aa). Residues 162-183 form a basic motif region; sequence KRKAQNRAAQRAFRERKEKHLK. The leucine-zipper stretch occupies residues 185 to 192; that stretch reads LEAKVEEL. The tract at residues 214–364 is transcription activation 1; sequence QLELKEYRKR…RGYQVNSSYS (151 aa). A compositionally biased stretch (polar residues) spans 270 to 294; it reads LFTNTQTSKSNQNKAKDNPTATPRS. The disordered stretch occupies residues 270-416; sequence LFTNTQTSKS…AVKATESSTP (147 aa). A n-CRD region spans residues 289–301; the sequence is TATPRSEAQVPGV. Over residues 310 to 321 the composition is skewed to low complexity; it reads SSPNGLSNGPSP. Composition is skewed to polar residues over residues 322-344 and 358-369; these read AKSTPSGQTPNSQTSTRPGSGTL and QVNSSYSASTKQ. Over residues 372 to 394 the composition is skewed to low complexity; the sequence is HDTPSSDSPSSSSDSHQSQLLSS. Positions 409–508 are transcription activation 2; it reads KATESSTPHA…SQDFGTFFDD (100 aa). 3 cysteine pairs are disulfide-bonded: C562–C586, C562–C595, and C586–C595. The interval 562–595 is c-CRD; that stretch reads CNKIWDRLQSMEKFRNGEIDVDNLCSELRTKARC. The Nuclear export signal signature appears at 580-587; that stretch reads IDVDNLCS.

It belongs to the bZIP family. YAP subfamily. In terms of processing, depending on the oxidative stress inducing agent, yap1 can undergo two distinct conformational changes, both involving disulfide bond formation, and both masking the nuclear export signal, thus abolishing nuclear export.

Its subcellular location is the nucleus. The protein localises to the cytoplasm. Functionally, transcription activator involved in oxidative stress response and redox homeostasis. Regulates the transcription of genes encoding antioxidant enzymes and components of the cellular thiol-reducing pathways, including thioredoxin peroxidase (aspF3), cytochrome peroxidase, and the protein AFUA_3G00730, which appears to belong to the glutathione S-transferase family. Proteins of the protein degradation pathway are also regulated by yap1, as well the p-nitroreductase family protein AFUA_5G09910. May be involved in antifungal resistance to voriconazole. This chain is AP-1-like transcription factor yap1, found in Aspergillus fumigatus (strain ATCC MYA-4609 / CBS 101355 / FGSC A1100 / Af293) (Neosartorya fumigata).